A 397-amino-acid polypeptide reads, in one-letter code: Succinate--CoA ligase [ADP-forming] subunit beta (397 aa).

Positions 9-254 (KALLKGYGAP…ETEEDAKEIE (246 aa)) constitute an ATP-grasp domain. ATP is bound by residues lysine 46, 53–55 (GRG), glutamate 109, alanine 112, and glutamate 117. Residues asparagine 209 and aspartate 223 each contribute to the Mg(2+) site. Residues asparagine 274 and 331–333 (GIM) contribute to the substrate site.

It belongs to the succinate/malate CoA ligase beta subunit family. As to quaternary structure, heterotetramer of two alpha and two beta subunits. Mg(2+) serves as cofactor.

It catalyses the reaction succinate + ATP + CoA = succinyl-CoA + ADP + phosphate. It carries out the reaction GTP + succinate + CoA = succinyl-CoA + GDP + phosphate. Its pathway is carbohydrate metabolism; tricarboxylic acid cycle; succinate from succinyl-CoA (ligase route): step 1/1. Succinyl-CoA synthetase functions in the citric acid cycle (TCA), coupling the hydrolysis of succinyl-CoA to the synthesis of either ATP or GTP and thus represents the only step of substrate-level phosphorylation in the TCA. The beta subunit provides nucleotide specificity of the enzyme and binds the substrate succinate, while the binding sites for coenzyme A and phosphate are found in the alpha subunit. The chain is Succinate--CoA ligase [ADP-forming] subunit beta from Agrobacterium fabrum (strain C58 / ATCC 33970) (Agrobacterium tumefaciens (strain C58)).